We begin with the raw amino-acid sequence, 273 residues long: Large ribosomal subunit protein uL2cz/uL2cy (273 aa).

Disordered stretches follow at residues 1–23 (MAIHLYKTSTPSTRNGAVDSQVK) and 224–273 (NPVD…RRRK).

This sequence belongs to the universal ribosomal protein uL2 family. Part of the 50S ribosomal subunit.

It is found in the plastid. The protein resides in the chloroplast. In Amborella trichopoda, this protein is Large ribosomal subunit protein uL2cz/uL2cy (rpl2-A).